Reading from the N-terminus, the 446-residue chain is Phosphoglucosamine mutase (446 aa).

The active-site Phosphoserine intermediate is Ser101. Positions 101, 240, 242, and 244 each coordinate Mg(2+). Ser101 carries the phosphoserine modification.

The protein belongs to the phosphohexose mutase family. It depends on Mg(2+) as a cofactor. Activated by phosphorylation.

The enzyme catalyses alpha-D-glucosamine 1-phosphate = D-glucosamine 6-phosphate. In terms of biological role, catalyzes the conversion of glucosamine-6-phosphate to glucosamine-1-phosphate. The polypeptide is Phosphoglucosamine mutase (Coxiella burnetii (strain CbuK_Q154) (Coxiella burnetii (strain Q154))).